Reading from the N-terminus, the 104-residue chain is ATP-dependent Clp protease adapter protein ClpS (104 aa).

This sequence belongs to the ClpS family. In terms of assembly, binds to the N-terminal domain of the chaperone ClpA.

Involved in the modulation of the specificity of the ClpAP-mediated ATP-dependent protein degradation. The polypeptide is ATP-dependent Clp protease adapter protein ClpS (Nitratidesulfovibrio vulgaris (strain ATCC 29579 / DSM 644 / CCUG 34227 / NCIMB 8303 / VKM B-1760 / Hildenborough) (Desulfovibrio vulgaris)).